A 316-amino-acid chain; its full sequence is Olfactory receptor 6B9 (316 aa).

The Extracellular segment spans residues 1–22 (MENITNISEFILMGFPTAPWLQ). Asn3 and Asn6 each carry an N-linked (GlcNAc...) asparagine glycan. A helical membrane pass occupies residues 23 to 43 (ILLFSIFFITYVFVLLENLVI). The Cytoplasmic portion of the chain corresponds to 44 to 64 (ILTVWVTGSLHKPMYYFLSTM). The chain crosses the membrane as a helical span at residues 65–85 (SFLEAWYISVTVPKMLAGFLF). Residues 86–97 (RPNTISFLGCMT) are Extracellular-facing. Residues Cys95 and Cys187 are joined by a disulfide bond. A helical membrane pass occupies residues 98 to 118 (QLYFFMSLACTECVLLAAMAY). The Cytoplasmic segment spans residues 119–132 (DRYVAICWPLRYPV). Residues 133–153 (MMTTGFCVQLTISSWVSGFTI) traverse the membrane as a helical segment. The Extracellular segment spans residues 154 to 199 (SMAKVYFISRVAFCGNNVLNHFFCDVSPILKLACMNLSMAETVDFA). The helical transmembrane segment at 200–220 (LAIVILIFPLSATVLSYGFIV) threads the bilayer. At 221 to 237 (STVLQIPSATGQRKAFS) the chain is on the cytoplasmic side. The chain crosses the membrane as a helical span at residues 238–258 (TCASHLTVVVIFYTAVIFMYV). Residues 259 to 269 (RPRAIASFNSN) are Extracellular-facing. A helical membrane pass occupies residues 270–290 (KLISAIYAVFTPMLNPIIYCL). Residues 291-316 (RNKEVKDAIRKTIAGGRAPALGESIS) are Cytoplasmic-facing.

It belongs to the G-protein coupled receptor 1 family. As to expression, olfactory epithelium.

The protein localises to the cell membrane. In terms of biological role, odorant receptor. The protein is Olfactory receptor 6B9 of Mus musculus (Mouse).